The chain runs to 367 residues: Serine/threonine-protein phosphatase 2A activator 2 (367 aa).

The protein belongs to the PTPA-type PPIase family.

The protein localises to the cytoplasm. The catalysed reaction is [protein]-peptidylproline (omega=180) = [protein]-peptidylproline (omega=0). Functionally, PPIases accelerate the folding of proteins. It catalyzes the cis-trans isomerization of proline imidic peptide bonds in oligopeptides. Acts as a regulatory subunit for PP2A-like phosphatases modulating their activity or substrate specificity, probably by inducing a conformational change in the catalytic subunit, a direct target of the PPIase. Can reactivate inactive phosphatase PP2A-phosphatase methylesterase complexes (PP2Ai) in presence of ATP and Mg(2+) by dissociating the inactive form from the complex. In Debaryomyces hansenii (strain ATCC 36239 / CBS 767 / BCRC 21394 / JCM 1990 / NBRC 0083 / IGC 2968) (Yeast), this protein is Serine/threonine-protein phosphatase 2A activator 2 (RRD2).